We begin with the raw amino-acid sequence, 238 residues long: 2-C-methyl-D-erythritol 4-phosphate cytidylyltransferase (238 aa).

Belongs to the IspD/TarI cytidylyltransferase family. IspD subfamily.

The catalysed reaction is 2-C-methyl-D-erythritol 4-phosphate + CTP + H(+) = 4-CDP-2-C-methyl-D-erythritol + diphosphate. It participates in isoprenoid biosynthesis; isopentenyl diphosphate biosynthesis via DXP pathway; isopentenyl diphosphate from 1-deoxy-D-xylulose 5-phosphate: step 2/6. Its function is as follows. Catalyzes the formation of 4-diphosphocytidyl-2-C-methyl-D-erythritol from CTP and 2-C-methyl-D-erythritol 4-phosphate (MEP). The sequence is that of 2-C-methyl-D-erythritol 4-phosphate cytidylyltransferase from Aliivibrio fischeri (strain ATCC 700601 / ES114) (Vibrio fischeri).